A 499-amino-acid polypeptide reads, in one-letter code: Histidine ammonia-lyase (499 aa).

Residues 142 to 144 (ASG) constitute a cross-link (5-imidazolinone (Ala-Gly)). Ser143 is modified (2,3-didehydroalanine (Ser)).

This sequence belongs to the PAL/histidase family. In terms of processing, contains an active site 4-methylidene-imidazol-5-one (MIO), which is formed autocatalytically by cyclization and dehydration of residues Ala-Ser-Gly.

The protein localises to the cytoplasm. The catalysed reaction is L-histidine = trans-urocanate + NH4(+). Its pathway is amino-acid degradation; L-histidine degradation into L-glutamate; N-formimidoyl-L-glutamate from L-histidine: step 1/3. The polypeptide is Histidine ammonia-lyase (Staphylococcus saprophyticus subsp. saprophyticus (strain ATCC 15305 / DSM 20229 / NCIMB 8711 / NCTC 7292 / S-41)).